Consider the following 361-residue polypeptide: DNA polymerase subunit gamma-2, mitochondrial (361 aa).

A mitochondrion-targeting transit peptide spans 1-18 (MSRIQRCFKSLASAGFFR).

As to quaternary structure, component of the DNA polymerase gamma complex consisting of two subunits: the catalytic subunit DNApol-gamma/DNApolG1 and the accessory subunit PolG2/DNApol-gamma35. As to expression, expressed in ovaries (at protein level).

The protein resides in the mitochondrion. In terms of biological role, as accessory component of the DNA polymerase gamma complex is involved in the replication of mitochondrial DNA. Does not bind DNA. Essential for mitochondrial DNA maintenance and larval development. The chain is DNA polymerase subunit gamma-2, mitochondrial from Drosophila melanogaster (Fruit fly).